Reading from the N-terminus, the 108-residue chain is Large ribosomal subunit protein uL24 (108 aa).

This sequence belongs to the universal ribosomal protein uL24 family. As to quaternary structure, part of the 50S ribosomal subunit.

Functionally, one of two assembly initiator proteins, it binds directly to the 5'-end of the 23S rRNA, where it nucleates assembly of the 50S subunit. Its function is as follows. One of the proteins that surrounds the polypeptide exit tunnel on the outside of the subunit. This chain is Large ribosomal subunit protein uL24, found in Geobacter sulfurreducens (strain ATCC 51573 / DSM 12127 / PCA).